We begin with the raw amino-acid sequence, 295 residues long: Protoheme IX farnesyltransferase (295 aa).

Helical transmembrane passes span 43-63 (PIQLALLVLGTSAAAGGVAAL), 92-112 (SAFVLGVLMCIGSLFLLYALV), 114-134 (PLAALFTLLTIFSYLGWYTPA), 140-160 (WSTEIGAVAGAFPPLIGWSAG), 166-186 (ALGWVLFGVLFFWQVPHFMAV), 231-251 (LLWGLTTWFYGVAAAVTGLWF), and 272-292 (FFASIGYLPLVLGALVIDRLF).

Belongs to the UbiA prenyltransferase family. Protoheme IX farnesyltransferase subfamily.

It localises to the cell inner membrane. The enzyme catalyses heme b + (2E,6E)-farnesyl diphosphate + H2O = Fe(II)-heme o + diphosphate. Its pathway is porphyrin-containing compound metabolism; heme O biosynthesis; heme O from protoheme: step 1/1. Functionally, converts heme B (protoheme IX) to heme O by substitution of the vinyl group on carbon 2 of heme B porphyrin ring with a hydroxyethyl farnesyl side group. In Opitutus terrae (strain DSM 11246 / JCM 15787 / PB90-1), this protein is Protoheme IX farnesyltransferase.